The following is a 520-amino-acid chain: 2-isopropylmalate synthase (520 aa).

The Pyruvate carboxyltransferase domain maps to 12 to 274 (VVIFDTTLRD…DTGIDTTMLT (263 aa)). Asp21, His209, His211, and Asn245 together coordinate Mn(2+). Residues 398 to 520 (KLLSLSVIAG…RLHAQHAAVV (123 aa)) form a regulatory domain region.

It belongs to the alpha-IPM synthase/homocitrate synthase family. LeuA type 1 subfamily. As to quaternary structure, homodimer. Requires Mn(2+) as cofactor.

Its subcellular location is the cytoplasm. The catalysed reaction is 3-methyl-2-oxobutanoate + acetyl-CoA + H2O = (2S)-2-isopropylmalate + CoA + H(+). It functions in the pathway amino-acid biosynthesis; L-leucine biosynthesis; L-leucine from 3-methyl-2-oxobutanoate: step 1/4. Catalyzes the condensation of the acetyl group of acetyl-CoA with 3-methyl-2-oxobutanoate (2-ketoisovalerate) to form 3-carboxy-3-hydroxy-4-methylpentanoate (2-isopropylmalate). The sequence is that of 2-isopropylmalate synthase from Methylorubrum populi (strain ATCC BAA-705 / NCIMB 13946 / BJ001) (Methylobacterium populi).